A 272-amino-acid polypeptide reads, in one-letter code: Probable glutathione S-transferase DHAR2, chloroplastic (272 aa).

Residues 1-57 (MAVLLRTTTSATTATSGGSSSATALLATTFRRGGRRLLLLPATRGSAPRRAALLTAR) constitute a chloroplast transit peptide. Residues Lys-68 and Asp-79 each coordinate glutathione. Lys-68 and Asp-79 together coordinate L-ascorbate. Residues 70 to 148 (SLTVPDRLGD…AIEEKYPEPS (79 aa)) form the GST N-terminal domain. The active-site Nucleophile is Cys-80. Residues Lys-107, Val-120, Ser-133, His-219, and Trp-266 each contribute to the glutathione site. The GST C-terminal domain maps to 126–272 (EEQWVADSDV…IAGWRPKVMG (147 aa)). Lys-269 contacts L-ascorbate.

Belongs to the GST superfamily. DHAR family. In terms of assembly, monomer.

It is found in the plastid. It localises to the chloroplast. It catalyses the reaction RX + glutathione = an S-substituted glutathione + a halide anion + H(+). The catalysed reaction is L-dehydroascorbate + 2 glutathione = glutathione disulfide + L-ascorbate. Its function is as follows. Involved in ascorbate homeostasis. Maintains redox pools of ascorbate by recycling dihydroascorbate (DHA) to ascorbate. Involved in scavenging reactive oxygen species (ROS) under oxidative stresses. This Oryza sativa subsp. japonica (Rice) protein is Probable glutathione S-transferase DHAR2, chloroplastic.